Here is a 148-residue protein sequence, read N- to C-terminus: 6,7-dimethyl-8-ribityllumazine synthase (148 aa).

5-amino-6-(D-ribitylamino)uracil-binding positions include phenylalanine 13, 44–46 (ALE), and 73–75 (MVI). 78 to 79 (ET) contacts (2S)-2-hydroxy-3-oxobutyl phosphate. Histidine 81 functions as the Proton donor in the catalytic mechanism. 5-amino-6-(D-ribitylamino)uracil is bound at residue asparagine 106. Arginine 120 lines the (2S)-2-hydroxy-3-oxobutyl phosphate pocket.

Belongs to the DMRL synthase family.

The enzyme catalyses (2S)-2-hydroxy-3-oxobutyl phosphate + 5-amino-6-(D-ribitylamino)uracil = 6,7-dimethyl-8-(1-D-ribityl)lumazine + phosphate + 2 H2O + H(+). The protein operates within cofactor biosynthesis; riboflavin biosynthesis; riboflavin from 2-hydroxy-3-oxobutyl phosphate and 5-amino-6-(D-ribitylamino)uracil: step 1/2. Its function is as follows. Catalyzes the formation of 6,7-dimethyl-8-ribityllumazine by condensation of 5-amino-6-(D-ribitylamino)uracil with 3,4-dihydroxy-2-butanone 4-phosphate. This is the penultimate step in the biosynthesis of riboflavin. This Agrobacterium fabrum (strain C58 / ATCC 33970) (Agrobacterium tumefaciens (strain C58)) protein is 6,7-dimethyl-8-ribityllumazine synthase.